Here is an 84-residue protein sequence, read N- to C-terminus: Small ribosomal subunit protein bS18A (84 aa).

The protein belongs to the bacterial ribosomal protein bS18 family. Part of the 30S ribosomal subunit. Forms a tight heterodimer with protein bS6.

Binds as a heterodimer with protein bS6 to the central domain of the 16S rRNA, where it helps stabilize the platform of the 30S subunit. The polypeptide is Small ribosomal subunit protein bS18A (Frankia alni (strain DSM 45986 / CECT 9034 / ACN14a)).